The primary structure comprises 460 residues: ATP synthase subunit beta (460 aa).

Residue 150–157 (GGAGVGKT) participates in ATP binding.

The protein belongs to the ATPase alpha/beta chains family. As to quaternary structure, F-type ATPases have 2 components, CF(1) - the catalytic core - and CF(0) - the membrane proton channel. CF(1) has five subunits: alpha(3), beta(3), gamma(1), delta(1), epsilon(1). CF(0) has three main subunits: a(1), b(2) and c(9-12). The alpha and beta chains form an alternating ring which encloses part of the gamma chain. CF(1) is attached to CF(0) by a central stalk formed by the gamma and epsilon chains, while a peripheral stalk is formed by the delta and b chains.

It localises to the cell inner membrane. It carries out the reaction ATP + H2O + 4 H(+)(in) = ADP + phosphate + 5 H(+)(out). Produces ATP from ADP in the presence of a proton gradient across the membrane. The catalytic sites are hosted primarily by the beta subunits. This is ATP synthase subunit beta from Erwinia tasmaniensis (strain DSM 17950 / CFBP 7177 / CIP 109463 / NCPPB 4357 / Et1/99).